The sequence spans 243 residues: Geranylgeranylglyceryl phosphate synthase (243 aa).

Positions 22 and 51 each coordinate Mg(2+). Sn-glycerol 1-phosphate is bound by residues 169-175, 200-201, and 222-223; these read YLEAGSG, GG, and GT.

The protein belongs to the GGGP/HepGP synthase family. Group II subfamily. The cofactor is Mg(2+).

Its subcellular location is the cytoplasm. The enzyme catalyses sn-glycerol 1-phosphate + (2E,6E,10E)-geranylgeranyl diphosphate = sn-3-O-(geranylgeranyl)glycerol 1-phosphate + diphosphate. Its pathway is membrane lipid metabolism; glycerophospholipid metabolism. Prenyltransferase that catalyzes the transfer of the geranylgeranyl moiety of geranylgeranyl diphosphate (GGPP) to the C3 hydroxyl of sn-glycerol-1-phosphate (G1P). This reaction is the first ether-bond-formation step in the biosynthesis of archaeal membrane lipids. In Methanosphaera stadtmanae (strain ATCC 43021 / DSM 3091 / JCM 11832 / MCB-3), this protein is Geranylgeranylglyceryl phosphate synthase.